A 511-amino-acid polypeptide reads, in one-letter code: Glutamyl-tRNA(Gln) amidotransferase subunit B, mitochondrial (511 aa).

The N-terminal 6 residues, 1–6, are a transit peptide targeting the mitochondrion; sequence MLRRYL.

Belongs to the GatB/GatE family. GatB subfamily. Subunit of the heterotrimeric GatFAB amidotransferase (AdT) complex, composed of A, B and F subunits.

It is found in the mitochondrion. The enzyme catalyses L-glutamyl-tRNA(Gln) + L-glutamine + ATP + H2O = L-glutaminyl-tRNA(Gln) + L-glutamate + ADP + phosphate + H(+). Its function is as follows. Allows the formation of correctly charged Gln-tRNA(Gln) through the transamidation of misacylated Glu-tRNA(Gln) in the mitochondria. The reaction takes place in the presence of glutamine and ATP through an activated gamma-phospho-Glu-tRNA(Gln). The protein is Glutamyl-tRNA(Gln) amidotransferase subunit B, mitochondrial of Lodderomyces elongisporus (strain ATCC 11503 / CBS 2605 / JCM 1781 / NBRC 1676 / NRRL YB-4239) (Yeast).